Reading from the N-terminus, the 35-residue chain is MAWTKPIIREIECGMEINMYGPENEDRHDDRDDLF.

The segment at residues 16–20 (EINMY) is a cross-link (pyrroloquinoline quinone (Glu-Tyr)).

This sequence belongs to the PqqA family.

It functions in the pathway cofactor biosynthesis; pyrroloquinoline quinone biosynthesis. In terms of biological role, required for coenzyme pyrroloquinoline quinone (PQQ) biosynthesis. PQQ is probably formed by cross-linking a specific glutamate to a specific tyrosine residue and excising these residues from the peptide. In Roseobacter denitrificans (strain ATCC 33942 / OCh 114) (Erythrobacter sp. (strain OCh 114)), this protein is Coenzyme PQQ synthesis protein A.